The chain runs to 541 residues: Tripeptidyl aminopeptidase (541 aa).

The first 36 residues, 1 to 36, serve as a signal peptide directing secretion; it reads MRKSSIRRRATAFGTAGALVTATLIAGAVSAPAASA. The propeptide occupies 37 to 39; it reads APA. Positions 123-501 constitute an AB hydrolase-1 domain; that stretch reads GALIYNPGGP…SRLITERDAG (379 aa). Ser-249 acts as the Nucleophile in catalysis. The active site involves Asp-474. The active-site Proton donor is the His-503.

Belongs to the peptidase S33 family.

Its subcellular location is the secreted. Its function is as follows. Cleaves tripeptides from the N-termini of proteins. Does not cleave mono- or dipeptides, or N-terminally blocked peptides. This chain is Tripeptidyl aminopeptidase, found in Streptomyces coelicolor (strain ATCC BAA-471 / A3(2) / M145).